The primary structure comprises 478 residues: Chromosomal replication initiator protein DnaA (478 aa).

The segment at 1–71 is domain I, interacts with DnaA modulators; the sequence is MKEFWQTCVS…EALAAEWFQR (71 aa). A domain II region spans residues 71 to 140; sequence RPVQVAFELP…DAAGVVYERS (70 aa). The tract at residues 141-357 is domain III, AAA+ region; it reads RLNTDLTFDN…GALRKVLAYA (217 aa). ATP is bound by residues glycine 185, glycine 187, lysine 188, and threonine 189. The tract at residues 358–478 is domain IV, binds dsDNA; it reads RFHGRDVLSV…LHVLEQTLKG (121 aa).

Belongs to the DnaA family. Oligomerizes as a right-handed, spiral filament on DNA at oriC.

The protein localises to the cytoplasm. In terms of biological role, plays an essential role in the initiation and regulation of chromosomal replication. ATP-DnaA binds to the origin of replication (oriC) to initiate formation of the DNA replication initiation complex once per cell cycle. Binds the DnaA box (a 9 base pair repeat at the origin) and separates the double-stranded (ds)DNA. Forms a right-handed helical filament on oriC DNA; dsDNA binds to the exterior of the filament while single-stranded (ss)DNA is stabiized in the filament's interior. The ATP-DnaA-oriC complex binds and stabilizes one strand of the AT-rich DNA unwinding element (DUE), permitting loading of DNA polymerase. After initiation quickly degrades to an ADP-DnaA complex that is not apt for DNA replication. Binds acidic phospholipids. The sequence is that of Chromosomal replication initiator protein DnaA from Bordetella petrii (strain ATCC BAA-461 / DSM 12804 / CCUG 43448).